Here is a 594-residue protein sequence, read N- to C-terminus: Acyl-coenzyme A thioesterase 11 (594 aa).

The N-terminal 20 residues, 1–20, are a transit peptide targeting the mitochondrion; the sequence is MIQNVGNHLRRGFASMFSNR. A phosphoserine mark is found at Ser-15 and Ser-25. The disordered stretch occupies residues 20 to 43; sequence RTSRKSISHPESGDPPTMAEGEGY. Positions 45–157 constitute a HotDog ACOT-type 1 domain; the sequence is NPTEVQMSQL…LATFVAHREL (113 aa). CoA-binding positions include 93–95, 122–124, Arg-183, and 272–274; these read TAS, NSS, and HFR. Positions 217–330 constitute a HotDog ACOT-type 2 domain; it reads EKTRVESVEL…FMTFVVLDKD (114 aa). The START domain occupies 370–582; that stretch reads KQAEVALSVP…FKACESFLLD (213 aa).

It is found in the mitochondrion matrix. Its subcellular location is the cytoplasm. The enzyme catalyses hexadecanoyl-CoA + H2O = hexadecanoate + CoA + H(+). It catalyses the reaction tetradecanoyl-CoA + H2O = tetradecanoate + CoA + H(+). It carries out the reaction dodecanoyl-CoA + H2O = dodecanoate + CoA + H(+). The catalysed reaction is butanoyl-CoA + H2O = butanoate + CoA + H(+). Its pathway is lipid metabolism; fatty acid metabolism. In terms of biological role, has an acyl-CoA thioesterase activity with a preference for the long chain fatty acyl-CoA thioesters hexadecanoyl-CoA/palmitoyl-CoA and tetradecanoyl-CoA/myristoyl-CoA which are the main substrates in the mitochondrial beta-oxidation pathway. This Mus musculus (Mouse) protein is Acyl-coenzyme A thioesterase 11 (Acot11).